Here is a 500-residue protein sequence, read N- to C-terminus: MTIFDNYEVWFVIGSQHLYGPEALRQVTKHAEHVVNSLNAEAKLPCKLVLKPLGTTPDEITHICRDANYDDKCAGLVVWLHTFSPAKMWINGLTILNKPLLQFHTQYNAALPWDSIDMDFMNLNQTAHGGREFGFIGARMRQQHSVVTGHWQDKEAHQRIGGWMRQAVSKQDTRHLKVCRFGDNMREVAVTDGDKVAAQIKFGFSVNTWAVGDLVQVVNSISDGDISALVDEYESSYRLTPAAQVHGDKRQNVLDAARIELGMKRFLEQGGFHAFTTTFEDLHGLKQLPGLAVQRLMQQGYGFAGEGDWKTAALLRIMKVMSTGLQGGTSFMEDYTYHFDNGNDLVLGSHMLEVCPTIATAEKPILDVQPLGIGGKADPARLIFNTQTGPAIVASLIDLGDRFRLLVNTIETVPTPHDLPKLPVANALWKAQPDLRTASEAWIIAGGAHHTVFSHALNLDDMRQFAELHDIELTVIDNDTRLPSFKDALRWNEVYYGSKR.

Mn(2+)-binding residues include E306, E333, H350, and H450.

It belongs to the arabinose isomerase family. In terms of assembly, homohexamer. Mn(2+) is required as a cofactor.

It catalyses the reaction beta-L-arabinopyranose = L-ribulose. It participates in carbohydrate degradation; L-arabinose degradation via L-ribulose; D-xylulose 5-phosphate from L-arabinose (bacterial route): step 1/3. Functionally, catalyzes the conversion of L-arabinose to L-ribulose. This Klebsiella pneumoniae subsp. pneumoniae (strain ATCC 700721 / MGH 78578) protein is L-arabinose isomerase.